The primary structure comprises 385 residues: Meiosis-specific protein MEI4 (385 aa).

Residues 1-126 are interaction with REC114; the sequence is MDVQKWYLRT…LSQHFVESCT (126 aa). The disordered stretch occupies residues 86–110; it reads AQEPKSSESTLTSMEDSGCDLSNEQ. Positions 92–107 are enriched in polar residues; that stretch reads SESTLTSMEDSGCDLS.

This sequence belongs to the MEI4L family. Part of the MCD recombinosome complex, at least composed of IHO1, REC114 and MEI4. Forms a complex with REC114; the interaction is required for MEI4 stability. Interacts (via N-terminal domain) with REC114 (via C-terminal domain). Interacts with IHO1.

The protein localises to the chromosome. In terms of biological role, required for DNA double-strand breaks (DSBs) formation in unsynapsed regions during meiotic recombination. Probably acts by forming a complex with IHO1 and REC114, which activates DSBs formation in unsynapsed regions, an essential step to ensure completion of synapsis. The polypeptide is Meiosis-specific protein MEI4 (Homo sapiens (Human)).